A 531-amino-acid polypeptide reads, in one-letter code: Polygalacturonase (531 aa).

A signal peptide spans 1–23; sequence MILSHRYTLIALAAAILSSGAHA. D307 serves as the catalytic Proton donor. The active site involves H333. The tract at residues 518 to 531 is required for PGA export across the outer membrane and catalytic activity; sequence AFVPLKSVAPTSPI.

Belongs to the glycosyl hydrolase 28 family. Monomer.

Its subcellular location is the secreted. The catalysed reaction is (1,4-alpha-D-galacturonosyl)n+m + H2O = (1,4-alpha-D-galacturonosyl)n + (1,4-alpha-D-galacturonosyl)m.. Its function is as follows. Contributes to the wilt disease production on tomato. This is Polygalacturonase (pglA) from Ralstonia nicotianae (strain ATCC BAA-1114 / GMI1000) (Ralstonia solanacearum).